A 113-amino-acid chain; its full sequence is uncharacterized protein (113 aa).

This is an uncharacterized protein from Haemophilus influenzae (strain ATCC 51907 / DSM 11121 / KW20 / Rd).